Here is a 149-residue protein sequence, read N- to C-terminus: GATA transcription factor 15 (149 aa).

Basic and acidic residues predominate over residues 1-10 (MLDPTEKVID). 2 disordered regions span residues 1–41 (MLDP…NEKK) and 76–102 (RRTL…GDSL). A GATA-type zinc finger spans residues 37-91 (SNEKKSCAICGTSKTPLWRGGPAGPKSLCNACGIRNRKKRRTLISNRSEDKKKKS).

It belongs to the type IV zinc-finger family. Class B subfamily.

It localises to the nucleus. Functionally, transcriptional regulator that specifically binds 5'-GATA-3' or 5'-GAT-3' motifs within gene promoters. The chain is GATA transcription factor 15 (GATA15) from Arabidopsis thaliana (Mouse-ear cress).